The chain runs to 563 residues: Dihydroxy-acid dehydratase (563 aa).

Cys-50 is a binding site for [2Fe-2S] cluster. Residue Asp-82 coordinates Mg(2+). [2Fe-2S] cluster is bound at residue Cys-123. The Mg(2+) site is built by Asp-124 and Lys-125. N6-carboxylysine is present on Lys-125. Cys-195 provides a ligand contact to [2Fe-2S] cluster. A Mg(2+)-binding site is contributed by Glu-447. The active-site Proton acceptor is the Ser-473.

It belongs to the IlvD/Edd family. As to quaternary structure, homodimer. Requires [2Fe-2S] cluster as cofactor. It depends on Mg(2+) as a cofactor.

It carries out the reaction (2R)-2,3-dihydroxy-3-methylbutanoate = 3-methyl-2-oxobutanoate + H2O. It catalyses the reaction (2R,3R)-2,3-dihydroxy-3-methylpentanoate = (S)-3-methyl-2-oxopentanoate + H2O. It participates in amino-acid biosynthesis; L-isoleucine biosynthesis; L-isoleucine from 2-oxobutanoate: step 3/4. The protein operates within amino-acid biosynthesis; L-valine biosynthesis; L-valine from pyruvate: step 3/4. Functions in the biosynthesis of branched-chain amino acids. Catalyzes the dehydration of (2R,3R)-2,3-dihydroxy-3-methylpentanoate (2,3-dihydroxy-3-methylvalerate) into 2-oxo-3-methylpentanoate (2-oxo-3-methylvalerate) and of (2R)-2,3-dihydroxy-3-methylbutanoate (2,3-dihydroxyisovalerate) into 2-oxo-3-methylbutanoate (2-oxoisovalerate), the penultimate precursor to L-isoleucine and L-valine, respectively. The polypeptide is Dihydroxy-acid dehydratase (Nostoc sp. (strain PCC 7120 / SAG 25.82 / UTEX 2576)).